Reading from the N-terminus, the 176-residue chain is Nucleoside triphosphate/diphosphate phosphatase (176 aa).

Arginine 23 functions as the Proton donor in the catalytic mechanism. The Mg(2+) site is built by asparagine 87, aspartate 103, aspartate 105, aspartate 107, aspartate 120, and glutamate 123.

This sequence belongs to the Ntdp family. Mg(2+) serves as cofactor.

The catalysed reaction is a ribonucleoside 5'-triphosphate + H2O = a ribonucleoside 5'-diphosphate + phosphate + H(+). It catalyses the reaction a ribonucleoside 5'-diphosphate + H2O = a ribonucleoside 5'-phosphate + phosphate + H(+). In terms of biological role, has nucleoside phosphatase activity towards nucleoside triphosphates and nucleoside diphosphates. This Bacillus pumilus (strain SAFR-032) protein is Nucleoside triphosphate/diphosphate phosphatase.